Here is a 195-residue protein sequence, read N- to C-terminus: UPF0215 protein TK2033 (195 aa).

This sequence belongs to the UPF0215 family.

In Thermococcus kodakarensis (strain ATCC BAA-918 / JCM 12380 / KOD1) (Pyrococcus kodakaraensis (strain KOD1)), this protein is UPF0215 protein TK2033.